A 349-amino-acid polypeptide reads, in one-letter code: 26S proteasome non-ATPase regulatory subunit 4 (349 aa).

In terms of domain architecture, VWFA spans 5–188; it reads ATIVCLDNSE…LSDIILQSPI (184 aa). The UIM 1 domain maps to 204–223; sequence DTDPDLAMALKLSLEEEKQR. The segment covering 219–234 has biased composition (basic and acidic residues); sequence EEKQRQERERKAREEA. Disordered regions lie at residues 219–257 and 274–349; these read EEKQ…MDVN and TDKM…NEKK. A compositionally biased stretch (low complexity) spans 235–253; it reads NGGSTNSGTTTTTAPTESN. The region spanning 259–278 is the UIM 2 domain; the sequence is EDDPELAEALALSMATDKME. The segment covering 280–301 has biased composition (low complexity); sequence QSSTTNTDSQPPQQQQQPPTDD. The segment covering 335-349 has biased composition (basic and acidic residues); sequence LSKKDEDKDKDNEKK.

This sequence belongs to the proteasome subunit S5A family. The 26S proteasome is composed of a core protease, known as the 20S proteasome, capped at one or both ends by the 19S regulatory complex (RC). The RC is composed of at least 18 different subunits in two subcomplexes, the base and the lid, which form the portions proximal and distal to the 20S proteolytic core, respectively.

Its function is as follows. Binds and presumably selects ubiquitin-conjugates for destruction. The sequence is that of 26S proteasome non-ATPase regulatory subunit 4 (psmD4) from Dictyostelium discoideum (Social amoeba).